Here is a 99-residue protein sequence, read N- to C-terminus: UPF0386 protein mll0189 (99 aa).

Belongs to the UPF0386 family.

This is UPF0386 protein mll0189 from Mesorhizobium japonicum (strain LMG 29417 / CECT 9101 / MAFF 303099) (Mesorhizobium loti (strain MAFF 303099)).